The following is a 223-amino-acid chain: Putative lipoprotein NMB1126/NMB1164 (223 aa).

Residues 1–19 (MKTVSTAVVLAAAAVSLTG) form the signal peptide. C20 carries N-palmitoyl cysteine lipidation. The S-diacylglycerol cysteine moiety is linked to residue C20.

Its subcellular location is the cell membrane. The sequence is that of Putative lipoprotein NMB1126/NMB1164 from Neisseria meningitidis serogroup B (strain ATCC BAA-335 / MC58).